We begin with the raw amino-acid sequence, 221 residues long: GTP cyclohydrolase III (221 aa).

The protein belongs to the archaeal-type GTP cyclohydrolase family.

It carries out the reaction GTP + 3 H2O = 2-amino-5-formylamino-6-(5-phospho-D-ribosylamino)pyrimidin-4(3H)-one + 2 phosphate + 2 H(+). Catalyzes the formation of 2-amino-5-formylamino-6-ribofuranosylamino-4(3H)-pyrimidinone ribonucleotide monophosphate and inorganic phosphate from GTP. Also has an independent pyrophosphate phosphohydrolase activity. This Pyrobaculum calidifontis (strain DSM 21063 / JCM 11548 / VA1) protein is GTP cyclohydrolase III.